A 279-amino-acid chain; its full sequence is Probable endonuclease 4 (279 aa).

Zn(2+)-binding residues include H69, H109, E145, D179, H182, H216, D229, H231, and E261.

Belongs to the AP endonuclease 2 family. The cofactor is Zn(2+).

The enzyme catalyses Endonucleolytic cleavage to 5'-phosphooligonucleotide end-products.. Endonuclease IV plays a role in DNA repair. It cleaves phosphodiester bonds at apurinic or apyrimidinic (AP) sites, generating a 3'-hydroxyl group and a 5'-terminal sugar phosphate. This Buchnera aphidicola subsp. Schizaphis graminum (strain Sg) protein is Probable endonuclease 4.